The following is a 152-amino-acid chain: Peptide deformylase (152 aa).

The Fe cation site is built by cysteine 88 and histidine 130. Glutamate 131 is an active-site residue. Histidine 134 lines the Fe cation pocket.

This sequence belongs to the polypeptide deformylase family. Requires Fe(2+) as cofactor.

The catalysed reaction is N-terminal N-formyl-L-methionyl-[peptide] + H2O = N-terminal L-methionyl-[peptide] + formate. In terms of biological role, removes the formyl group from the N-terminal Met of newly synthesized proteins. Requires at least a dipeptide for an efficient rate of reaction. N-terminal L-methionine is a prerequisite for activity but the enzyme has broad specificity at other positions. This chain is Peptide deformylase, found in Carboxydothermus hydrogenoformans (strain ATCC BAA-161 / DSM 6008 / Z-2901).